A 970-amino-acid polypeptide reads, in one-letter code: Anaphase-promoting complex subunit 3 (970 aa).

TPR repeat units lie at residues 35-68 (EDNL…TMIK), 74-107 (ALSN…NNNN), 142-175 (NNNS…NSIS), and 185-218 (GSVY…YPFL). The disordered stretch occupies residues 106-149 (NNNNNNNNNNNNNNNNNNNNNNNKDKCNNSNKNNDSNNNSNSNN). Residues 274–300 (KVNNNNNNNNNNNNNINNNNSSNKNNE) form a disordered region. 2 TPR repeats span residues 319–353 (IKPN…TPIN) and 361–394 (TNQQ…TPQT). Disordered regions lie at residues 358 to 379 (IQQT…PSQQ), 414 to 525 (PIPM…TTTT), and 556 to 582 (SSLS…HNKS). Residues 359–379 (QQTNQQQQQQQQQQPQQPSQQ) show a composition bias toward low complexity. The segment covering 424 to 443 (SKGSQHPPSSNSQTPYTPST) has biased composition (polar residues). The segment covering 446–460 (VHHHQKQQPHQHKKS) has biased composition (basic residues). Over residues 500-525 (TSSTSKQQQQQQQTKQQTTTTTTTTT) the composition is skewed to low complexity. TPR repeat units follow at residues 546-580 (TEEF…HHHN), 636-671 (LELF…QYRT), 672-705 (GWVL…EPYR), 740-773 (PYSW…DPDM), 775-807 (YAYT…DPRH), 808-841 (YNAF…NESS), 843-876 (VLCC…QPKN), 878-910 (FAKF…EPKE), and 911-944 (TPIY…DPKN). Residues 570 to 580 (YQQHHHLHHHN) show a composition bias toward basic residues.

Belongs to the APC3/CDC27 family. In terms of assembly, the APC/C is composed of at least 13 subunits that stay tightly associated throughout the cell cycle: anapc1, anapc2, anapc3, anapc4, anapc5, anapc6, anapc7, anapc8, anapc10, anapc11, cdc20, cdc26 and cdh1.

The protein resides in the nucleus. Its pathway is protein modification; protein ubiquitination. Functionally, component of the anaphase promoting complex/cyclosome (APC/C), a cell cycle-regulated E3 ubiquitin-protein ligase complex that controls progression through mitosis and the G1 phase of the cell cycle. This Dictyostelium discoideum (Social amoeba) protein is Anaphase-promoting complex subunit 3 (anapc3).